We begin with the raw amino-acid sequence, 280 residues long: Chaperone protein LppX (280 aa).

Residues 1-18 form the signal peptide; sequence MRKWLIFLLIAAVAGLSA. Residue C19 is the site of N-palmitoyl cysteine attachment. A lipid anchor (S-diacylglycerol cysteine) is attached at C19.

It is found in the cell membrane. Is required for the expression of the adjacently encoded xylanase Xyn11E in an active form. LppX seems to act as a specific chaperone necessary for the correct folding of the xylanase during secretion across the cytoplasmic membrane. This Paenibacillus barcinonensis protein is Chaperone protein LppX.